Reading from the N-terminus, the 403-residue chain is Ribose-phosphate pyrophosphokinase 1, chloroplastic (403 aa).

Residues 1–49 constitute a chloroplast transit peptide; sequence MASLGLSFPPAAKTPTYLASSSSTFFSNSSLSVRTSQFRSRNSVFACVK. 4 residues coordinate Mg(2+): Asp-217, His-219, Asp-228, and Asp-232. Positions 303–318 are binding of phosphoribosylpyrophosphate; the sequence is GKVAIMVDDMIDTAGT.

The protein belongs to the ribose-phosphate pyrophosphokinase family. The cofactor is Mg(2+).

It is found in the plastid. Its subcellular location is the chloroplast. It carries out the reaction D-ribose 5-phosphate + ATP = 5-phospho-alpha-D-ribose 1-diphosphate + AMP + H(+). The chain is Ribose-phosphate pyrophosphokinase 1, chloroplastic (PRS1) from Arabidopsis thaliana (Mouse-ear cress).